A 427-amino-acid polypeptide reads, in one-letter code: Glutamate-1-semialdehyde 2,1-aminomutase (427 aa).

N6-(pyridoxal phosphate)lysine is present on Lys-265.

Belongs to the class-III pyridoxal-phosphate-dependent aminotransferase family. HemL subfamily. In terms of assembly, homodimer. Pyridoxal 5'-phosphate is required as a cofactor.

The protein resides in the cytoplasm. It catalyses the reaction (S)-4-amino-5-oxopentanoate = 5-aminolevulinate. It participates in porphyrin-containing compound metabolism; protoporphyrin-IX biosynthesis; 5-aminolevulinate from L-glutamyl-tRNA(Glu): step 2/2. The polypeptide is Glutamate-1-semialdehyde 2,1-aminomutase (Burkholderia multivorans (strain ATCC 17616 / 249)).